A 440-amino-acid chain; its full sequence is Fibulin-7 (440 aa).

An N-terminal signal peptide occupies residues Met1–Phe24. The stretch at Leu28–Thr73 forms a coiled coil. The 58-residue stretch at Val79 to Asp136 folds into the Sushi domain. Cystine bridges form between Cys81/Cys121, Cys107/Cys134, Cys140/Cys151, Cys145/Cys160, Cys162/Cys171, Cys229/Cys245, Cys241/Cys254, Cys256/Cys269, Cys275/Cys288, Cys282/Cys297, and Cys302/Cys319. The N-linked (GlcNAc...) asparagine glycan is linked to Asn124. The region spanning Asp136–Gln172 is the EGF-like 1; calcium-binding domain. An EGF-like 2; calcium-binding domain is found at Asp225 to Glu270. An EGF-like 3; calcium-binding domain is found at Asp271 to Glu320. Asn308 carries N-linked (GlcNAc...) asparagine glycosylation.

It belongs to the fibulin family. Interacts with heparin, FBLN1, FN1 and DSPP. Preferentially binds dental mesenchyme cells and odontoblasts but not dental epithelial cells or nondental cells. Binding requires a heparan sulfate-containing receptor on the cell surface as well as an integrin. In terms of processing, N-glycosylated. As to expression, highly expressed in newborn incisors and molars. A weaker expression is seen in the brain, kidneys, muscles and bones.

Its subcellular location is the secreted. The protein resides in the extracellular space. It is found in the extracellular matrix. In terms of biological role, an adhesion molecule that interacts with extracellular matrix molecules in developing teeth and may play important roles in differentiation and maintenance of odontoblasts as well as in dentin formation. This is Fibulin-7 (Fbln7) from Mus musculus (Mouse).